Here is a 357-residue protein sequence, read N- to C-terminus: Gas vesicle ATPase GvpN (357 aa).

Polar residues predominate over residues 22 to 36 (ATSASKNGGRTTPSA). A disordered region spans residues 22–43 (ATSASKNGGRTTPSALTPRPRS). ATP is bound at residue 72–79 (GPAGTGKT).

The protein belongs to the CbbQ/NirQ/NorQ/GpvN family. Forms homodimers, probably interacts with other GV proteins including GvpA.

The protein localises to the gas vesicle. It localises to the cytoplasm. The enzyme catalyses ATP + H2O = ADP + phosphate + H(+). Its function is as follows. An ATPase that functions in gas vesicle formation. A minor component of the gas vesicle, also found in soluble extracts. Gas vesicles (GV) are hollow, gas filled proteinaceous nanostructures. During planktonic growth they allow positioning of the organism at a favorable depth for light or nutrient acquisition. The polypeptide is Gas vesicle ATPase GvpN (Ancylobacter aquaticus).